The primary structure comprises 238 residues: Isoprene-epoxide--glutathione S-transferase (238 aa).

In terms of domain architecture, GST N-terminal spans 7-82; sequence YVPAWGIPDI…YLKNKFGDKL (76 aa). Positions 118–238 constitute a GST C-terminal domain; that stretch reads DAGWETYIPF…LERIRKQYDI (121 aa).

Belongs to the GST superfamily. Homodimer.

It carries out the reaction 2-glutathionyl-2-methylbut-3-en-1-ol = (3R)-3,4-epoxy-3-methylbut-1-ene + glutathione. With respect to regulation, activity is inhibited by 1,2-epoxyhexane. In terms of biological role, involved in isoprene degradation. Catalyzes the glutathione-dependent ring opening of various epoxides. The highest conversion rate is observed with the physiological substrate, 3,4-epoxy-3-methyl-1-butene, which is the primary oxidation product of isoprene. It can also use other epoxides, including epoxyethane, epoxypropane, epithiopropane, epichlorohydrin, epifluorohydrin, epibromohydrin, 1,2-epoxybutane, 1,2-epoxyhexane, cis-2,3-epoxybutane, cis-1,2-dichloroepoxyethane and trans-1,2-dichloroepoxyethane. This is Isoprene-epoxide--glutathione S-transferase from Rhodococcus sp. (strain AD45).